A 283-amino-acid polypeptide reads, in one-letter code: Putative 4-diphosphocytidyl-2-C-methyl-D-erythritol kinase (283 aa).

Lys-10 is a catalytic residue. 94 to 104 (PVCAGLGGGST) serves as a coordination point for ATP. Asp-136 is a catalytic residue.

Belongs to the GHMP kinase family. IspE subfamily.

It catalyses the reaction 4-CDP-2-C-methyl-D-erythritol + ATP = 4-CDP-2-C-methyl-D-erythritol 2-phosphate + ADP + H(+). Its function is as follows. Catalyzes the phosphorylation of the position 2 hydroxy group of 4-diphosphocytidyl-2C-methyl-D-erythritol. The chain is Putative 4-diphosphocytidyl-2-C-methyl-D-erythritol kinase from Streptococcus agalactiae serotype III (strain NEM316).